We begin with the raw amino-acid sequence, 149 residues long: MANQLTEEQIAEFKEAFSLFDKDGDGCITTQELGTVMRSLGQNPTEAELQDMVNEIDKDGNGTVDFPEFLTMMSRKMKDTDSEEEIREAFRVFDKDGNGFVSAAELRHVMTRLGEKLSDEEVDEMIQAADTDGDGQVNYEEFVHMLVSK.

4 EF-hand domains span residues 8-43 (EQIA…LGQN), 44-79 (PTEA…KMKD), 81-116 (DSEE…LGEK), and 117-149 (LSDE…LVSK). Ca(2+) contacts are provided by aspartate 21, aspartate 23, aspartate 25, cysteine 27, glutamate 32, aspartate 57, aspartate 59, asparagine 61, threonine 63, glutamate 68, aspartate 94, aspartate 96, asparagine 98, glutamate 105, aspartate 130, aspartate 132, aspartate 134, glutamine 136, and glutamate 141.

It belongs to the calmodulin family. As to quaternary structure, interacts with MYO10, the interaction is calcium-dependent and essential for MYO10 function in filopodial extension.

May function as a specific light chain of unconventional myosin-10 (MYO10), also enhances MYO10 translation, possibly by acting as a chaperone for the emerging MYO10 heavy chain protein. May compete with calmodulin by binding, with different affinities, to cellular substrates. The sequence is that of Calmodulin-like protein 3 (Calml3) from Rattus norvegicus (Rat).